Reading from the N-terminus, the 954-residue chain is Glycine dehydrogenase (decarboxylating) (954 aa).

Lysine 701 is subject to N6-(pyridoxal phosphate)lysine.

Belongs to the GcvP family. As to quaternary structure, the glycine cleavage system is composed of four proteins: P, T, L and H. It depends on pyridoxal 5'-phosphate as a cofactor.

It carries out the reaction N(6)-[(R)-lipoyl]-L-lysyl-[glycine-cleavage complex H protein] + glycine + H(+) = N(6)-[(R)-S(8)-aminomethyldihydrolipoyl]-L-lysyl-[glycine-cleavage complex H protein] + CO2. Functionally, the glycine cleavage system catalyzes the degradation of glycine. The P protein binds the alpha-amino group of glycine through its pyridoxal phosphate cofactor; CO(2) is released and the remaining methylamine moiety is then transferred to the lipoamide cofactor of the H protein. The polypeptide is Glycine dehydrogenase (decarboxylating) (Bordetella parapertussis (strain 12822 / ATCC BAA-587 / NCTC 13253)).